Here is a 151-residue protein sequence, read N- to C-terminus: Histone H2B.1 (151 aa).

2 stretches are compositionally biased toward basic and acidic residues: residues Met1–Pro28 and Glu36–Lys51. Residues Met1 to Lys58 are disordered. 2 positions are modified to N6-acetyllysine: Lys7 and Lys37. Residue Lys147 forms a Glycyl lysine isopeptide (Lys-Gly) (interchain with G-Cter in ubiquitin) linkage.

This sequence belongs to the histone H2B family. As to quaternary structure, the nucleosome is a histone octamer containing two molecules each of H2A, H2B, H3 and H4 assembled in one H3-H4 heterotetramer and two H2A-H2B heterodimers. The octamer wraps approximately 147 bp of DNA. Post-translationally, can be acetylated to form H2BK6ac and H2BK33ac. In terms of processing, monoubiquitinated to form H2BK143ub1; may give a specific tag for epigenetic transcriptional activation.

It is found in the nucleus. Its subcellular location is the chromosome. Core component of nucleosome. Nucleosomes wrap and compact DNA into chromatin, limiting DNA accessibility to the cellular machineries which require DNA as a template. Histones thereby play a central role in transcription regulation, DNA repair, DNA replication and chromosomal stability. DNA accessibility is regulated via a complex set of post-translational modifications of histones, also called histone code, and nucleosome remodeling. This chain is Histone H2B.1, found in Zea mays (Maize).